A 105-amino-acid polypeptide reads, in one-letter code: Large ribosomal subunit protein uL24 (105 aa).

This sequence belongs to the universal ribosomal protein uL24 family. Part of the 50S ribosomal subunit.

Functionally, one of two assembly initiator proteins, it binds directly to the 5'-end of the 23S rRNA, where it nucleates assembly of the 50S subunit. One of the proteins that surrounds the polypeptide exit tunnel on the outside of the subunit. The polypeptide is Large ribosomal subunit protein uL24 (Lachnoclostridium phytofermentans (strain ATCC 700394 / DSM 18823 / ISDg) (Clostridium phytofermentans)).